Consider the following 235-residue polypeptide: Regulator of G-protein signaling 18 (235 aa).

The residue at position 49 (serine 49) is a Phosphoserine. Residues serine 86–isoleucine 202 form the RGS domain. Phosphoserine occurs at positions 216 and 218.

As to expression, expressed in bone marrow, spleen, fetal liver and lung. At very low levels expressed in heart.

It is found in the cytoplasm. Inhibits signal transduction by increasing the GTPase activity of G protein alpha subunits thereby driving them into their inactive GDP-bound form. Binds to G(i) alpha-1, G(i) alpha-2, G(i) alpha-3 and G(q) alpha. The polypeptide is Regulator of G-protein signaling 18 (Rgs18) (Mus musculus (Mouse)).